The sequence spans 1405 residues: Centlein (1405 aa).

Residues 1-14 (MAARSPPSPHPSPP) show a composition bias toward pro residues. The tract at residues 1-79 (MAARSPPSPH…GGAAPAHAPL (79 aa)) is disordered. Ala-2 is modified (N-acetylalanine). Phosphoserine is present on residues Ser-5 and Ser-22. A compositionally biased stretch (basic and acidic residues) spans 48–58 (VVADESDKIWV). The segment covering 61-71 (EGSGGRRGPGG) has biased composition (gly residues). Residues 95–126 (EEAMVTRTQLLEEELSSLKEELALCQADKEFV) adopt a coiled-coil conformation. 2 disordered regions span residues 421 to 450 (KLKE…QVPH) and 493 to 529 (SRKS…EELQ). Coiled-coil stretches lie at residues 613-655 (NELA…ELNR) and 681-793 (KNGK…ELIN). Residues 865–917 (WEDVSESSSDSEAQTSQTLGTIIVETSQKISPTEDGKDQKESDPTEDSQTQGK) are disordered. Residues 877 to 895 (AQTSQTLGTIIVETSQKIS) are compositionally biased toward polar residues. A compositionally biased stretch (basic and acidic residues) spans 896–907 (PTEDGKDQKESD). The stretch at 980–1311 (NIILLRERII…IRELKKMKKN (332 aa)) forms a coiled coil. Thr-1343 is subject to Phosphothreonine.

In terms of assembly, interacts with CEP250 and CEP68. Interacts with NEK2; the interaction leads to phosphorylation of CNTLN. Phosphorylated directly or indirectly by NEK2.

Its subcellular location is the cytoplasm. The protein resides in the cytoskeleton. It is found in the microtubule organizing center. It localises to the centrosome. The protein localises to the centriole. In terms of biological role, required for centrosome cohesion and recruitment of CEP68 to centrosomes. The polypeptide is Centlein (CNTLN) (Homo sapiens (Human)).